Here is a 326-residue protein sequence, read N- to C-terminus: Acetyl-coenzyme A carboxylase carboxyl transferase subunit beta (326 aa).

The 270-residue stretch at 29–298 (LWIKCEACGT…TLISDESLET (270 aa)) folds into the CoA carboxyltransferase N-terminal domain. Zn(2+)-binding residues include Cys-33, Cys-36, Cys-52, and Cys-55. The C4-type zinc-finger motif lies at 33–55 (CEACGTLTYTKDLQANQMVCPEC). The segment at 302-326 (CHLPFQAESHNLSTTDNKIQPTPQG) is disordered. Polar residues predominate over residues 309-326 (ESHNLSTTDNKIQPTPQG).

It belongs to the AccD/PCCB family. In terms of assembly, acetyl-CoA carboxylase is a heterohexamer composed of biotin carboxyl carrier protein (AccB), biotin carboxylase (AccC) and two subunits each of ACCase subunit alpha (AccA) and ACCase subunit beta (AccD). Zn(2+) is required as a cofactor.

Its subcellular location is the cytoplasm. The catalysed reaction is N(6)-carboxybiotinyl-L-lysyl-[protein] + acetyl-CoA = N(6)-biotinyl-L-lysyl-[protein] + malonyl-CoA. It participates in lipid metabolism; malonyl-CoA biosynthesis; malonyl-CoA from acetyl-CoA: step 1/1. In terms of biological role, component of the acetyl coenzyme A carboxylase (ACC) complex. Biotin carboxylase (BC) catalyzes the carboxylation of biotin on its carrier protein (BCCP) and then the CO(2) group is transferred by the transcarboxylase to acetyl-CoA to form malonyl-CoA. The sequence is that of Acetyl-coenzyme A carboxylase carboxyl transferase subunit beta from Trichodesmium erythraeum (strain IMS101).